A 567-amino-acid polypeptide reads, in one-letter code: Structural protein ORF567 (567 aa).

The segment at 7–393 (INALLGFPEE…MPIEHKPEQQ (387 aa)) is disordered. Pro residues predominate over residues 65–79 (TPTPIRPAPPPPPPI). The span at 180–200 (PKREPEHHTHGSTNNEHESKR) shows a compositional bias: basic and acidic residues. A compositionally biased stretch (low complexity) spans 219 to 231 (THQTSPSHSSGGT). 2 stretches are compositionally biased toward pro residues: residues 253-278 (MPIPPNPPIVREPTPTPQPTPIPTPP) and 285-299 (TPTPPRTPQPTPPPT). Over residues 300 to 312 (HGSSSTNSSGSTN) the composition is skewed to low complexity. The segment covering 319–335 (PKPIPIPPTPPPPPPHH) has biased composition (pro residues). Residues 343 to 353 (PKHESEHHDHG) show a composition bias toward basic and acidic residues. The span at 354-372 (SSSTNSSSSTSNSSSGGTN) shows a compositional bias: low complexity.

The protein resides in the virion. The protein is Structural protein ORF567 of Acidianus two-tailed virus (ATV).